Consider the following 124-residue polypeptide: Small ribosomal subunit protein uS12 (124 aa).

At D89 the chain carries 3-methylthioaspartic acid.

This sequence belongs to the universal ribosomal protein uS12 family. Part of the 30S ribosomal subunit. Contacts proteins S8 and S17. May interact with IF1 in the 30S initiation complex.

Its function is as follows. With S4 and S5 plays an important role in translational accuracy. Functionally, interacts with and stabilizes bases of the 16S rRNA that are involved in tRNA selection in the A site and with the mRNA backbone. Located at the interface of the 30S and 50S subunits, it traverses the body of the 30S subunit contacting proteins on the other side and probably holding the rRNA structure together. The combined cluster of proteins S8, S12 and S17 appears to hold together the shoulder and platform of the 30S subunit. In Vibrio vulnificus (strain CMCP6), this protein is Small ribosomal subunit protein uS12.